Here is a 428-residue protein sequence, read N- to C-terminus: UPF0229 protein YeaH (428 aa).

Basic and acidic residues predominate over residues 77-90 (PGNDHFIQNDRIER). The interval 77–111 (PGNDHFIQNDRIERPQSGGGGGSGSGQGQASQDGE) is disordered. The span at 93–103 (SGGGGGSGSGQ) shows a compositional bias: gly residues.

The protein belongs to the UPF0229 family.

The polypeptide is UPF0229 protein YeaH (Salmonella typhi).